The following is a 668-amino-acid chain: DNA ligase (668 aa).

Residues 37–41 (DNVYD), 86–87 (SM), and glutamate 116 contribute to the NAD(+) site. Lysine 118 serves as the catalytic N6-AMP-lysine intermediate. NAD(+) contacts are provided by arginine 139, glutamate 173, lysine 288, and lysine 312. 4 residues coordinate Zn(2+): cysteine 406, cysteine 409, cysteine 424, and cysteine 429. Positions 591-668 (APDNPFKDKT…TEEEAIAQIE (78 aa)) constitute a BRCT domain.

Belongs to the NAD-dependent DNA ligase family. LigA subfamily. Mg(2+) serves as cofactor. The cofactor is Mn(2+).

The catalysed reaction is NAD(+) + (deoxyribonucleotide)n-3'-hydroxyl + 5'-phospho-(deoxyribonucleotide)m = (deoxyribonucleotide)n+m + AMP + beta-nicotinamide D-nucleotide.. Its function is as follows. DNA ligase that catalyzes the formation of phosphodiester linkages between 5'-phosphoryl and 3'-hydroxyl groups in double-stranded DNA using NAD as a coenzyme and as the energy source for the reaction. It is essential for DNA replication and repair of damaged DNA. This Lactobacillus helveticus (strain DPC 4571) protein is DNA ligase.